Here is a 102-residue protein sequence, read N- to C-terminus: Large ribosomal subunit protein bL21 (102 aa).

Belongs to the bacterial ribosomal protein bL21 family. Part of the 50S ribosomal subunit. Contacts protein L20.

In terms of biological role, this protein binds to 23S rRNA in the presence of protein L20. The protein is Large ribosomal subunit protein bL21 of Levilactobacillus brevis (strain ATCC 367 / BCRC 12310 / CIP 105137 / JCM 1170 / LMG 11437 / NCIMB 947 / NCTC 947) (Lactobacillus brevis).